A 264-amino-acid chain; its full sequence is Small ribosomal subunit protein eS1 (264 aa).

It belongs to the eukaryotic ribosomal protein eS1 family. In terms of assembly, component of the small ribosomal subunit. Mature ribosomes consist of a small (40S) and a large (60S) subunit. The 40S subunit contains about 33 different proteins and 1 molecule of RNA (18S). The 60S subunit contains about 49 different proteins and 3 molecules of RNA (25S, 5.8S and 5S).

The protein resides in the cytoplasm. In Babesia bovis, this protein is Small ribosomal subunit protein eS1.